Here is a 381-residue protein sequence, read N- to C-terminus: Sulfate adenylyltransferase (381 aa).

This sequence belongs to the sulfate adenylyltransferase family.

The catalysed reaction is sulfate + ATP + H(+) = adenosine 5'-phosphosulfate + diphosphate. The protein operates within sulfur metabolism; hydrogen sulfide biosynthesis; sulfite from sulfate: step 1/3. The protein is Sulfate adenylyltransferase of Chloroflexus aurantiacus (strain ATCC 29366 / DSM 635 / J-10-fl).